Reading from the N-terminus, the 274-residue chain is ATP synthase subunit delta (274 aa).

Belongs to the ATPase delta chain family. F-type ATPases have 2 components, F(1) - the catalytic core - and F(0) - the membrane proton channel. F(1) has five subunits: alpha(3), beta(3), gamma(1), delta(1), epsilon(1). F(0) has three main subunits: a(1), b(2) and c(10-14). The alpha and beta chains form an alternating ring which encloses part of the gamma chain. F(1) is attached to F(0) by a central stalk formed by the gamma and epsilon chains, while a peripheral stalk is formed by the delta and b chains.

The protein localises to the cell membrane. In terms of biological role, f(1)F(0) ATP synthase produces ATP from ADP in the presence of a proton or sodium gradient. F-type ATPases consist of two structural domains, F(1) containing the extramembraneous catalytic core and F(0) containing the membrane proton channel, linked together by a central stalk and a peripheral stalk. During catalysis, ATP synthesis in the catalytic domain of F(1) is coupled via a rotary mechanism of the central stalk subunits to proton translocation. Functionally, this protein is part of the stalk that links CF(0) to CF(1). It either transmits conformational changes from CF(0) to CF(1) or is implicated in proton conduction. This chain is ATP synthase subunit delta, found in Corynebacterium efficiens (strain DSM 44549 / YS-314 / AJ 12310 / JCM 11189 / NBRC 100395).